A 931-amino-acid chain; its full sequence is Protein translocase subunit SecA (931 aa).

Residues glutamine 87, 105–109 (GEGKT), and aspartate 515 each bind ATP. Residues cysteine 915, cysteine 917, cysteine 926, and histidine 927 each contribute to the Zn(2+) site.

Belongs to the SecA family. As to quaternary structure, monomer and homodimer. Part of the essential Sec protein translocation apparatus which comprises SecA, SecYEG and auxiliary proteins SecDF-YajC and YidC. Zn(2+) serves as cofactor.

The protein localises to the cell inner membrane. It localises to the cytoplasm. The catalysed reaction is ATP + H2O + cellular proteinSide 1 = ADP + phosphate + cellular proteinSide 2.. Part of the Sec protein translocase complex. Interacts with the SecYEG preprotein conducting channel. Has a central role in coupling the hydrolysis of ATP to the transfer of proteins into and across the cell membrane, serving both as a receptor for the preprotein-SecB complex and as an ATP-driven molecular motor driving the stepwise translocation of polypeptide chains across the membrane. This Burkholderia pseudomallei (strain 1106a) protein is Protein translocase subunit SecA.